The primary structure comprises 355 residues: Arginine kinase (355 aa).

Residues 8 to 90 enclose the Phosphagen kinase N-terminal domain; sequence KLQAGFKKLE…FDPIIEDYHV (83 aa). 63-67 serves as a coordination point for L-arginine; sequence GVGIY. In terms of domain architecture, Phosphagen kinase C-terminal spans 118–355; that stretch reads YVISTRVRCG…LQLIKMEKEM (238 aa). ATP is bound by residues 121–125 and histidine 184; that span reads STRVR. Residue glutamate 224 coordinates L-arginine. Arginine 228 serves as a coordination point for ATP. Residue cysteine 270 coordinates L-arginine. ATP is bound by residues 279–283 and 308–313; these read RASVH and RGTRGE. Glutamate 313 is an L-arginine binding site.

It belongs to the ATP:guanido phosphotransferase family. Monomer.

The catalysed reaction is L-arginine + ATP = N(omega)-phospho-L-arginine + ADP + H(+). This Penaeus japonicus (Kuruma prawn) protein is Arginine kinase.